The primary structure comprises 1410 residues: Non-secreted LysM effector LysM15 (1410 aa).

LysM domains are found at residues 1179–1225 (TTYT…DICM) and 1231–1277 (TQYT…EILG). Over residues 1291-1303 (TTGDGITTTPGNG) the composition is skewed to low complexity. The disordered stretch occupies residues 1291-1317 (TTGDGITTTPGNGEYAQGVVSPPENST). Residues 1328–1375 (RWYSATADDLCVQICLKSGVSAKLFKAANPSLAADCDNSLIAGDAYCV) form the LysM 3 domain.

Belongs to the secreted LysM effector family.

Non-secreted LysM effector that might be involved in manipulation of host defenses for successful infection. This is Non-secreted LysM effector LysM15 from Penicillium expansum (Blue mold rot fungus).